The primary structure comprises 138 residues: Putative pre-16S rRNA nuclease (138 aa).

This sequence belongs to the YqgF nuclease family.

The protein resides in the cytoplasm. Could be a nuclease involved in processing of the 5'-end of pre-16S rRNA. This Bacteroides thetaiotaomicron (strain ATCC 29148 / DSM 2079 / JCM 5827 / CCUG 10774 / NCTC 10582 / VPI-5482 / E50) protein is Putative pre-16S rRNA nuclease.